We begin with the raw amino-acid sequence, 268 residues long: Deoxyuridine 5'-triphosphate nucleotidohydrolase (268 aa).

Substrate-binding positions include 172–174 (RSS) and 263–264 (FG).

This sequence belongs to the dUTPase family. Mg(2+) serves as cofactor.

The catalysed reaction is dUTP + H2O = dUMP + diphosphate + H(+). Its function is as follows. Involved in nucleotide metabolism: produces dUMP, the immediate precursor of thymidine nucleotides and decreases the intracellular concentration of dUTP to avoid uracil incorporation into viral DNA. In Suid herpesvirus 1 (strain Kaplan) (SuHV-1), this protein is Deoxyuridine 5'-triphosphate nucleotidohydrolase.